A 185-amino-acid chain; its full sequence is Ribosome-recycling factor (185 aa).

It belongs to the RRF family.

It localises to the cytoplasm. In terms of biological role, responsible for the release of ribosomes from messenger RNA at the termination of protein biosynthesis. May increase the efficiency of translation by recycling ribosomes from one round of translation to another. The sequence is that of Ribosome-recycling factor from Nitrosomonas europaea (strain ATCC 19718 / CIP 103999 / KCTC 2705 / NBRC 14298).